Consider the following 274-residue polypeptide: MDLLLVIKAIIMGIVEGITELLPISSTGHLILAADVMNFLSHDKRVVFEIFIQMGAMLAIVWEYRVKIFSSLAGAVRPGIERNLFINVAIAFFPAALVGFLFSDFIRTVLFSPYVVAGGFIVGGVIIMWVEKYAYAPRLDDMDRISYADAFNVGLCQCLALIPGTSRSGATIIGGMYFGLSRRASTEFSFFLAIPMIGAASLYALWEAREQMEIEDMGILAIGFITSFFVTFAVMRALLRFVSKHTYMAFAWYRIAFGLLVLATAYTGVINWSV.

A run of 8 helical transmembrane segments spans residues 4–24, 46–66, 86–106, 109–129, 145–165, 188–208, 214–234, and 250–270; these read LLVIKAIIMGIVEGITELLPI, VVFEIFIQMGAMLAIVWEYRV, INVAIAFFPAALVGFLFSDFI, VLFSPYVVAGGFIVGGVIIMW, ISYADAFNVGLCQCLALIPGT, FSFFLAIPMIGAASLYALWEA, IEDMGILAIGFITSFFVTFAV, and FAWYRIAFGLLVLATAYTGVI.

The protein belongs to the UppP family.

The protein localises to the cell inner membrane. It catalyses the reaction di-trans,octa-cis-undecaprenyl diphosphate + H2O = di-trans,octa-cis-undecaprenyl phosphate + phosphate + H(+). In terms of biological role, catalyzes the dephosphorylation of undecaprenyl diphosphate (UPP). Confers resistance to bacitracin. This is Undecaprenyl-diphosphatase from Cellvibrio japonicus (strain Ueda107) (Pseudomonas fluorescens subsp. cellulosa).